Consider the following 65-residue polypeptide: Large ribosomal subunit protein bL35 (65 aa).

The span at 1–15 shows a compositional bias: basic residues; sequence MPKMKTKSSAKKRFS. The tract at residues 1–21 is disordered; it reads MPKMKTKSSAKKRFSIRAGGS.

It belongs to the bacterial ribosomal protein bL35 family.

The chain is Large ribosomal subunit protein bL35 from Dechloromonas aromatica (strain RCB).